We begin with the raw amino-acid sequence, 352 residues long: UDP-N-acetylglucosamine--N-acetylmuramyl-(pentapeptide) pyrophosphoryl-undecaprenol N-acetylglucosamine transferase (352 aa).

Residues 14 to 16, Asn-124, Arg-164, Ser-185, and Gln-285 each bind UDP-N-acetyl-alpha-D-glucosamine; that span reads TGG.

Belongs to the glycosyltransferase 28 family. MurG subfamily.

The protein localises to the cell inner membrane. It carries out the reaction di-trans,octa-cis-undecaprenyl diphospho-N-acetyl-alpha-D-muramoyl-L-alanyl-D-glutamyl-meso-2,6-diaminopimeloyl-D-alanyl-D-alanine + UDP-N-acetyl-alpha-D-glucosamine = di-trans,octa-cis-undecaprenyl diphospho-[N-acetyl-alpha-D-glucosaminyl-(1-&gt;4)]-N-acetyl-alpha-D-muramoyl-L-alanyl-D-glutamyl-meso-2,6-diaminopimeloyl-D-alanyl-D-alanine + UDP + H(+). It functions in the pathway cell wall biogenesis; peptidoglycan biosynthesis. Its function is as follows. Cell wall formation. Catalyzes the transfer of a GlcNAc subunit on undecaprenyl-pyrophosphoryl-MurNAc-pentapeptide (lipid intermediate I) to form undecaprenyl-pyrophosphoryl-MurNAc-(pentapeptide)GlcNAc (lipid intermediate II). In Chlamydia trachomatis serovar L2 (strain ATCC VR-902B / DSM 19102 / 434/Bu), this protein is UDP-N-acetylglucosamine--N-acetylmuramyl-(pentapeptide) pyrophosphoryl-undecaprenol N-acetylglucosamine transferase.